The sequence spans 409 residues: Putative fatty acyl-CoA reductase 7 (409 aa).

Belongs to the fatty acyl-CoA reductase family.

In Arabidopsis thaliana (Mouse-ear cress), this protein is Putative fatty acyl-CoA reductase 7 (FAR7).